We begin with the raw amino-acid sequence, 238 residues long: Large ribosomal subunit protein uL2 (238 aa).

Over residues 1 to 11 (MGKRLISQNRG) the composition is skewed to polar residues. Disordered stretches follow at residues 1–22 (MGKR…APSH) and 202–223 (FGGG…APPG).

This sequence belongs to the universal ribosomal protein uL2 family. In terms of assembly, part of the 50S ribosomal subunit. Forms a bridge to the 30S subunit in the 70S ribosome.

One of the primary rRNA binding proteins. Required for association of the 30S and 50S subunits to form the 70S ribosome, for tRNA binding and peptide bond formation. It has been suggested to have peptidyltransferase activity; this is somewhat controversial. Makes several contacts with the 16S rRNA in the 70S ribosome. The sequence is that of Large ribosomal subunit protein uL2 from Methanosarcina acetivorans (strain ATCC 35395 / DSM 2834 / JCM 12185 / C2A).